A 1659-amino-acid polypeptide reads, in one-letter code: eIF-2-alpha kinase GCN2 (1659 aa).

The RWD domain occupies 17–128 (NELEAIRSIY…SFTQEKLDEF (112 aa)). The segment at 149 to 170 (KEQLEKEEREKQQETIKKRSDE) is disordered. Protein kinase domains follow at residues 256–527 (LVKP…MKFL) and 599–981 (FEEI…SGWL). Residues 605–613 (LGQGAFGQV) and lysine 628 each bind ATP. Disordered regions lie at residues 671–691 (NVFE…DFEE) and 727–768 (FENS…VPRR). Phosphoserine is present on serine 761. The Proton acceptor role is filled by aspartate 835. A phosphothreonine; by autocatalysis mark is found at threonine 882 and threonine 887. The tract at residues 999-1519 (NPSSPWQQQV…EFKRWDENSS (521 aa)) is histidyl-tRNA synthetase-like.

It belongs to the protein kinase superfamily. Ser/Thr protein kinase family. GCN2 subfamily. Homodimer; homodimerization is important for kinase activation by uncharged tRNAs. Interacts (via N-terminal RWD domain) with GCN1 (via N- and C-terminus); this interaction stimulates GCN2 kinase activity in a GCN20-dependent manner in response to amino acid starvation. Interacts (via N-terminus) with the GCN1-GCN20 complex on translating ribosomes in amino acid-starved cells; GCN1 may bind near the ribosomal A-site and promotes the transfer of uncharged tRNAs from the A-site to the tRNA-binding domain in GCN2 for its subsequent kinase activation, and hence allowing GCN4 translational activation and derepression of amino acid biosynthetic genes. Interacts (via C-terminus) with TIF11; this interaction is direct, occurs in amino acid-repleted cells, may be stabilized in a ribosome-dependent manner, reduces GCN2-mediated eIF-2-alpha phosphorylation but not GCN2 autophosphorylation and is lost in amino acid-starved cells and by uncharged tRNAs. Associates (via C-terminus) with ribosomes. Mg(2+) serves as cofactor. Autophosphorylated, autophosphorylation on Thr-882 and Thr-887 increases kinase activity.

The protein localises to the cytoplasm. It carries out the reaction L-seryl-[protein] + ATP = O-phospho-L-seryl-[protein] + ADP + H(+). The enzyme catalyses L-threonyl-[protein] + ATP = O-phospho-L-threonyl-[protein] + ADP + H(+). With respect to regulation, the integrated stress response (ISR) is activated in response to conditions that promote ribosome collisions: GCN1, which acts as a ribosome collision sensor, activates GCN2. The RQC pathway and the integrated stress response (ISR) antagonize each other: HEL2 prevents the activation of GCN2, while GCN2 suppresses RQC activation. Ribosome stalling-induced integrated stress response prefers ribosomes with empty A sites. The kinase activity is stimulated upon binding to uncharged tRNAs. Metabolic-stress sensing protein kinase that phosphorylates the alpha subunit of eukaryotic translation initiation factor 2 (eIF-2-alpha/SUI2) on 'Ser-52' in response to low amino acid, carbon, or purine availability. Required for adapatation to nutrient starvation by acting as a key component of the integrated stress response (ISR), by which cells alter their translational and transcriptional output in response to starvation. Converts phosphorylated eIF-2-alpha/SUI2 either to a competitive inhibitor of translation initiation factor eIF-2B, leading to a global protein synthesis repression, and thus to a reduced overall utilization of amino acids, or to a translational initiation activation of specific mRNAs, such as the transcriptional activator GCN4, and hence allowing GCN4-mediated reprogramming of transcription to alleviate nutrient depletion. Binds uncharged tRNAs. Binds to aminoacylated tRNA(Phe) less tightly than to deacylated tRNA(Phe). Binds to double-stranded RNA. This chain is eIF-2-alpha kinase GCN2, found in Saccharomyces cerevisiae (strain ATCC 204508 / S288c) (Baker's yeast).